The sequence spans 365 residues: tRNA/tmRNA (uracil-C(5))-methyltransferase (365 aa).

S-adenosyl-L-methionine contacts are provided by glutamine 189, tyrosine 217, asparagine 222, glutamate 238, and aspartate 298. Cysteine 323 functions as the Nucleophile in the catalytic mechanism. The active-site Proton acceptor is the glutamate 357.

Belongs to the class I-like SAM-binding methyltransferase superfamily. RNA M5U methyltransferase family. TrmA subfamily.

It catalyses the reaction uridine(54) in tRNA + S-adenosyl-L-methionine = 5-methyluridine(54) in tRNA + S-adenosyl-L-homocysteine + H(+). The catalysed reaction is uridine(341) in tmRNA + S-adenosyl-L-methionine = 5-methyluridine(341) in tmRNA + S-adenosyl-L-homocysteine + H(+). Functionally, dual-specificity methyltransferase that catalyzes the formation of 5-methyluridine at position 54 (m5U54) in all tRNAs, and that of position 341 (m5U341) in tmRNA (transfer-mRNA). The chain is tRNA/tmRNA (uracil-C(5))-methyltransferase from Shewanella pealeana (strain ATCC 700345 / ANG-SQ1).